Consider the following 351-residue polypeptide: Leukotriene B4 receptor 1 (351 aa).

At Met-1–Leu-21 the chain is on the extracellular side. N-linked (GlcNAc...) asparagine glycosylation is present at Asn-4. Residues Leu-22–Ser-44 form a helical membrane-spanning segment. Residues Ile-45–Ala-56 are Cytoplasmic-facing. Residues Leu-57–Leu-77 form a helical membrane-spanning segment. At His-78–Arg-93 the chain is on the extracellular side. The chain crosses the membrane as a helical span at residues Leu-94–Leu-115. The Cytoplasmic portion of the chain corresponds to Asp-116–Leu-140. Residues Ala-141–Lys-161 traverse the membrane as a helical segment. The Extracellular portion of the chain corresponds to Trp-162–Lys-179. Asn-164 is a glycosylation site (N-linked (GlcNAc...) asparagine). Residues Val-180–Ala-200 form a helical membrane-spanning segment. Over Ser-201–Arg-222 the chain is Cytoplasmic. The chain crosses the membrane as a helical span at residues Leu-223–Leu-243. Residues Val-244–Tyr-268 are Extracellular-facing. A helical transmembrane segment spans residues Val-269–Gly-289. At Gly-290–Lys-351 the chain is on the cytoplasmic side. Composition is skewed to polar residues over residues Glu-311–Lys-326 and Ser-339–Lys-351. The interval Glu-311 to Lys-351 is disordered.

Belongs to the G-protein coupled receptor 1 family. In terms of processing, phosphorylated by GRK6 upon leukotriene B4 binding; which promotes desensitization. As to expression, highly expressed on activated leukocytes, including eosinophils.

Its subcellular location is the cell membrane. Its function is as follows. Receptor for leukotriene B4, a potent chemoattractant involved in inflammation and immune response. In Mus musculus (Mouse), this protein is Leukotriene B4 receptor 1 (Ltb4r).